Reading from the N-terminus, the 134-residue chain is Mini-ribonuclease 3 (134 aa).

The active site involves Asp-23.

The protein belongs to the MrnC RNase family. In terms of assembly, homodimer. Mg(2+) is required as a cofactor.

It localises to the cytoplasm. Its function is as follows. Involved in correct processing of both the 5' and 3' ends of 23S rRNA precursor. Processes 30S rRNA precursor transcript even in absence of ribonuclease 3 (Rnc); Rnc processes 30S rRNA into smaller rRNA precursors. The protein is Mini-ribonuclease 3 of Brevibacillus brevis (strain 47 / JCM 6285 / NBRC 100599).